The primary structure comprises 178 residues: Fatty-acid and retinol-binding protein 1 (178 aa).

An N-terminal signal peptide occupies residues 1–16; sequence MYHRLILLALIGTTMA. Coiled-coil stretches lie at residues 67–89 and 130–153; these read DAALEALKAKSDNLYKNAVELRN and KQAARDIIAKYQALSEETKEELKV.

Belongs to the fatty-acid and retinol-binding protein (FARBP) family. In terms of processing, not glycosylated.

The protein resides in the secreted. Binds retinol and different fatty acids. The sequence is that of Fatty-acid and retinol-binding protein 1 from Wuchereria bancrofti.